The chain runs to 72 residues: UPF0352 protein CGSHiGG_07710 (72 aa).

This sequence belongs to the UPF0352 family.

In Haemophilus influenzae (strain PittGG), this protein is UPF0352 protein CGSHiGG_07710.